Reading from the N-terminus, the 74-residue chain is Conotoxin ca17a (74 aa).

Positions M1–A20 are cleaved as a signal peptide. The propeptide occupies Q21–R40. 4-hydroxyproline is present on P51.

Post-translationally, contains disulfide bonds. As to expression, expressed by the venom gland.

Its subcellular location is the secreted. The sequence is that of Conotoxin ca17a from Conus caracteristicus (Characteristic cone).